The following is a 269-amino-acid chain: Dynein regulatory complex protein 8 (269 aa).

The tract at residues 1–113 (MLGPGQVRLR…RTGKGLGYNS (113 aa)) is disordered. Over residues 54–76 (AQGSSSPGIQSGPSSRPGSPRGA) the composition is skewed to low complexity. EF-hand domains lie at 150-185 (EFHKKIKEAFEVFDHESNNTVDVREIGTIIRSLGCC) and 228-263 (IPEDVLLRAFEVLDSAKRGFLTKDELIKYMTEEDGV).

Belongs to the DRC8 family. Component of the nexin-dynein regulatory complex (N-DRC).

The protein localises to the cytoplasm. Its subcellular location is the cytoskeleton. It is found in the flagellum axoneme. Component of the nexin-dynein regulatory complex (N-DRC), a key regulator of ciliary/flagellar motility which maintains the alignment and integrity of the distal axoneme and regulates microtubule sliding in motile axonemes. This is Dynein regulatory complex protein 8 (EFCAB2) from Homo sapiens (Human).